A 1088-amino-acid chain; its full sequence is DEAD-box ATP-dependent RNA helicase 40 (1088 aa).

3 disordered regions span residues 1–28 (MATT…PWKG), 47–178 (TQYE…QYAH), and 192–254 (TQGL…QNTH). Alanine 2 carries the N-acetylalanine modification. In terms of domain architecture, WW spans 20–54 (PTLPQPWKGLIDGSTGILYYWNPETNVTQYERPSA). Composition is skewed to low complexity over residues 87 to 137 (VGHV…SQSM), 148 to 171 (QTYQ…MPQQ), and 200 to 215 (QTPQ…PSQQ). A compositionally biased stretch (basic and acidic residues) spans 222–231 (PKREGDEFHG). Residues 236-254 (GFSQPHLPNSERSPSQNTH) show a composition bias toward polar residues. The Q motif motif lies at 435–463 (ITFESSGLPPEILRELLSAGFPSPTPIQA). Positions 466–640 (WPIALQSRDI…SDLLVNPVQV (175 aa)) constitute a Helicase ATP-binding domain. 479–486 (AKTGSGKT) contacts ATP. Residues 588-591 (DEAD) carry the DEAD box motif. Positions 669 to 813 (RLEQILRSQE…QVPPQVRDIA (145 aa)) constitute a Helicase C-terminal domain. Gly residues-rich tracts occupy residues 861-885 (EGGF…GGRF), 893-902 (GRGGNRGRGF), 911-920 (NVGGRGGFGR), and 932-944 (FGRG…GRGV). The segment at 861 to 1033 (EGGFGGREGG…RRDRAPRVSG (173 aa)) is disordered. Basic and acidic residues predominate over residues 945–963 (GRFDNRRGRSRSRSPDLVR). Residues 969–983 (SSYSRSRSRSGSYSR) are compositionally biased toward low complexity. Over residues 984 to 1013 (SRSRSRSWSRSRSRSPRHSRDRGGHNRSRS) the composition is skewed to basic residues.

Belongs to the DEAD box helicase family. DDX5/DBP2 subfamily.

It is found in the nucleus. The enzyme catalyses ATP + H2O = ADP + phosphate + H(+). Its function is as follows. ATP-dependent RNA helicase involved nonsense-mediated mRNA decay and ribosome biogenesis through rRNA processing. This chain is DEAD-box ATP-dependent RNA helicase 40 (RH40), found in Arabidopsis thaliana (Mouse-ear cress).